The primary structure comprises 103 residues: Small ribosomal subunit protein uS10 (103 aa).

This sequence belongs to the universal ribosomal protein uS10 family. In terms of assembly, part of the 30S ribosomal subunit.

Functionally, involved in the binding of tRNA to the ribosomes. The chain is Small ribosomal subunit protein uS10 from Borrelia duttonii (strain Ly).